Consider the following 476-residue polypeptide: Glycogen synthase (476 aa).

K15 provides a ligand contact to ADP-alpha-D-glucose.

This sequence belongs to the glycosyltransferase 1 family. Bacterial/plant glycogen synthase subfamily.

It carries out the reaction [(1-&gt;4)-alpha-D-glucosyl](n) + ADP-alpha-D-glucose = [(1-&gt;4)-alpha-D-glucosyl](n+1) + ADP + H(+). It participates in glycan biosynthesis; glycogen biosynthesis. In terms of biological role, synthesizes alpha-1,4-glucan chains using ADP-glucose. This chain is Glycogen synthase, found in Bacillus cereus (strain ATCC 14579 / DSM 31 / CCUG 7414 / JCM 2152 / NBRC 15305 / NCIMB 9373 / NCTC 2599 / NRRL B-3711).